Here is a 140-residue protein sequence, read N- to C-terminus: Large ribosomal subunit protein uL13 (140 aa).

As to quaternary structure, part of the 50S ribosomal subunit.

Its function is as follows. This protein is one of the early assembly proteins of the 50S ribosomal subunit, although it is not seen to bind rRNA by itself. It is important during the early stages of 50S assembly. This chain is Large ribosomal subunit protein uL13, found in Thermus thermophilus (strain ATCC 27634 / DSM 579 / HB8).